Consider the following 508-residue polypeptide: Probable protein kinase UbiB (508 aa).

In terms of domain architecture, Protein kinase spans 118 to 494 (DFDLKPVASA…QKRQNFLLLL (377 aa)). Residues 124-132 (VASASVAQV) and K151 contribute to the ATP site. The active-site Proton acceptor is the D286. A helical transmembrane segment spans residues 488–508 (QNFLLLLIAILLAALLAKSLL).

This sequence belongs to the ABC1 family. UbiB subfamily.

The protein localises to the cell inner membrane. It functions in the pathway cofactor biosynthesis; ubiquinone biosynthesis [regulation]. Is probably a protein kinase regulator of UbiI activity which is involved in aerobic coenzyme Q (ubiquinone) biosynthesis. The polypeptide is Probable protein kinase UbiB (Chromobacterium violaceum (strain ATCC 12472 / DSM 30191 / JCM 1249 / CCUG 213 / NBRC 12614 / NCIMB 9131 / NCTC 9757 / MK)).